A 398-amino-acid polypeptide reads, in one-letter code: Succinate--CoA ligase [ADP-forming] subunit beta (398 aa).

The ATP-grasp domain occupies Lys9–Glu254. ATP contacts are provided by residues Lys46, Gly53–Gly55, Glu109, Ser112, and Glu117. Asn209 and Asp223 together coordinate Mg(2+). Residues Asn274 and Gly331–Met333 contribute to the substrate site.

Belongs to the succinate/malate CoA ligase beta subunit family. In terms of assembly, heterotetramer of two alpha and two beta subunits. Mg(2+) serves as cofactor.

It catalyses the reaction succinate + ATP + CoA = succinyl-CoA + ADP + phosphate. The catalysed reaction is GTP + succinate + CoA = succinyl-CoA + GDP + phosphate. It functions in the pathway carbohydrate metabolism; tricarboxylic acid cycle; succinate from succinyl-CoA (ligase route): step 1/1. Functionally, succinyl-CoA synthetase functions in the citric acid cycle (TCA), coupling the hydrolysis of succinyl-CoA to the synthesis of either ATP or GTP and thus represents the only step of substrate-level phosphorylation in the TCA. The beta subunit provides nucleotide specificity of the enzyme and binds the substrate succinate, while the binding sites for coenzyme A and phosphate are found in the alpha subunit. The chain is Succinate--CoA ligase [ADP-forming] subunit beta from Bradyrhizobium sp. (strain BTAi1 / ATCC BAA-1182).